The chain runs to 327 residues: Serine/threonine-protein phosphatase PP1-beta catalytic subunit (327 aa).

Position 2 is an N-acetylalanine (Ala-2). The Mn(2+) site is built by Asp-63, His-65, Asp-91, and Asn-123. The active-site Proton donor is His-124. Mn(2+) contacts are provided by His-172 and His-247. Residues 305–327 form a disordered region; that stretch reads QYGGLNSGRPVTPPRTANPPKKR.

It belongs to the PPP phosphatase family. PP-1 subfamily. It depends on Mn(2+) as a cofactor.

It is found in the cytoplasm. The protein localises to the nucleus. It catalyses the reaction O-phospho-L-seryl-[protein] + H2O = L-seryl-[protein] + phosphate. The catalysed reaction is O-phospho-L-threonyl-[protein] + H2O = L-threonyl-[protein] + phosphate. Protein phosphatase that associates with over 200 regulatory proteins to form highly specific holoenzymes which dephosphorylate hundreds of biological targets. Protein phosphatase (PP1) is essential for cell division, it participates in the regulation of glycogen metabolism, muscle contractility and protein synthesis. Involved in regulation of ionic conductances and long-term synaptic plasticity. This chain is Serine/threonine-protein phosphatase PP1-beta catalytic subunit (ppp1cb), found in Xenopus laevis (African clawed frog).